Reading from the N-terminus, the 135-residue chain is Large ribosomal subunit protein eL32 (135 aa).

It belongs to the eukaryotic ribosomal protein eL32 family.

This is Large ribosomal subunit protein eL32 from Methanococcus maripaludis (strain C6 / ATCC BAA-1332).